The sequence spans 691 residues: MDTSCVSINQCGFCTYLFNRSIPLAGEGDGAIMFNTMVDSMALGYIFSALYLLFRLQRSYTYLQKSSNNNNGNGNGNGSSNNDIISINSSNGLNRSGVKISQDTLWDKNFGISIDHPRIINSTYFKYTLFVSLWLAFEGLLLLFLPPNSLAYPAFVIIVGTGHIVTDNWVLVFLYGKEDDRFSARRSFYSCTLLYLIICCTTLASFFDDQTMCKKNDCQTFMFQDEYTSLAITVASLVVYTIVLGMTIKRSFLRPTGRIWLLFLMGYNCISSVGALLNILDVDAGYCFLGIAAIIYSFSYGPLLFRTCGNDTNLLRARGEFLPLLTNFQEYTSLFGRESISTSGEGATTALQLSAFYIRFNEFKFGQVIGEGYFGEVRKAVWKGAVVAVKILHRNSFRNTDGNKEENVFLKEVAILSILRHPNVLQFLGVCSETNLNGIVTEYMGGGSLDRLLTDRYFLIKQNPILAWNMAISIARGMFYLHDWKPNPILHRDLSTKNILLDESLTIAKVADFGLSKEQGFEMTSTVGHLCYQAPEVFIGELYTPKADVYSFGLLVWCIITGEQPNQNLQPLKMAHLAAYENYRPPMPQPMDPMWENLGKLIEMCWKKSPEERPSFSFILDFLEANVPISNTYVPPLKCISDNSVSNNFNNNNNTLNNGSTNNLGLLTLSFSTLNLQKQGGGAEEFHYIDG.

Residues methionine 1–methionine 33 are Extracellular-facing. The helical transmembrane segment at phenylalanine 34–phenylalanine 54 threads the bilayer. The Cytoplasmic segment spans residues arginine 55–lysine 126. The helical transmembrane segment at tyrosine 127–phenylalanine 144 threads the bilayer. Residues leucine 145–proline 153 lie on the Extracellular side of the membrane. The helical transmembrane segment at alanine 154–glycine 176 threads the bilayer. Topologically, residues lysine 177–arginine 186 are cytoplasmic. The chain crosses the membrane as a helical span at residues serine 187–phenylalanine 207. Over aspartate 208–tyrosine 227 the chain is Extracellular. Residues threonine 228 to isoleucine 248 form a helical membrane-spanning segment. Over lysine 249 to arginine 258 the chain is Cytoplasmic. A helical transmembrane segment spans residues isoleucine 259 to isoleucine 279. The Extracellular portion of the chain corresponds to leucine 280–alanine 284. A helical transmembrane segment spans residues glycine 285–phenylalanine 305. Over arginine 306–glycine 691 the chain is Cytoplasmic. Positions phenylalanine 363–valine 634 constitute a Protein kinase domain. ATP-binding positions include isoleucine 369–valine 377 and lysine 390. Catalysis depends on aspartate 493, which acts as the Proton acceptor.

Belongs to the protein kinase superfamily. TKL Tyr protein kinase family.

It is found in the membrane. It catalyses the reaction L-tyrosyl-[protein] + ATP = O-phospho-L-tyrosyl-[protein] + ADP + H(+). The chain is Seven transmembrane domain-containing tyrosine-protein kinase 1 (7tmk1) from Dictyostelium discoideum (Social amoeba).